Here is a 413-residue protein sequence, read N- to C-terminus: Inactive squalene synthase 2 (413 aa).

An N-acetylglycine modification is found at Gly-2. 2 consecutive transmembrane segments (helical) span residues 283–303 (AIFQ…ALCY) and 390–410 (AIFV…LKAN).

It belongs to the phytoene/squalene synthase family. The cofactor is Mg(2+). Requires Mn(2+) as cofactor. As to expression, mostly expressed in hypocotyls, leaves and cotyledons, and, to a lower extent, in stems.

It localises to the endoplasmic reticulum membrane. The polypeptide is Inactive squalene synthase 2 (Arabidopsis thaliana (Mouse-ear cress)).